The following is a 336-amino-acid chain: MSRPSLTRFLIEEQHAGRIDAELRQLITIVSRACKRISIAVSKGALGGVLGDAGTGNVQGEAQKKLDVLSNDILLEANAWGGHLAACASEEMDHSQPVPDQYPSGDFLLLFDPLDGSSNIDVNVSVGTIFSVLRAPKGTEKPGDEHFLQPGTQQVAAGYCIYGPSTMLVLTLGHGTHAFTLEREEGSFLLTQANMRVPEDTAEYAINMSNQRHWEPAMQAYVGDLLAGKDGARGKDFNMRWIASMVADVHRILTRGGIFIYPWDKKDPSKPGKLRLMYEANPMSMLVEQAGGAATTGRERILDIQPTQLHQRVPVFLGSKNEVAEATRYHLDADKA.

The Mg(2+) site is built by glutamate 90, aspartate 112, leucine 114, and aspartate 115. Substrate is bound by residues aspartate 115–serine 118, asparagine 207, and lysine 273. A Mg(2+)-binding site is contributed by glutamate 279.

Belongs to the FBPase class 1 family. In terms of assembly, homotetramer. It depends on Mg(2+) as a cofactor.

The protein resides in the cytoplasm. It catalyses the reaction beta-D-fructose 1,6-bisphosphate + H2O = beta-D-fructose 6-phosphate + phosphate. Its pathway is carbohydrate biosynthesis; gluconeogenesis. The protein is Fructose-1,6-bisphosphatase class 1 of Xanthomonas axonopodis pv. citri (strain 306).